The primary structure comprises 253 residues: DNA polymerase III subunit epsilon (253 aa).

2 residues coordinate a divalent metal cation: Asp-14 and Glu-16. Asp-14, Glu-16, Asp-63, and His-68 together coordinate substrate. His-163 serves as the catalytic Proton acceptor. Asp-168 lines the a divalent metal cation pocket. Asp-168 is a substrate binding site.

DNA polymerase III contains a core (composed of alpha, epsilon and theta chains) that associates with a tau subunit. This core dimerizes to form the POLIII' complex. PolIII' associates with the gamma complex (composed of gamma, delta, delta', psi and chi chains) and with the beta chain to form the complete DNA polymerase III complex. Requires Mg(2+) as cofactor. The cofactor is Mn(2+).

The catalysed reaction is DNA(n) + a 2'-deoxyribonucleoside 5'-triphosphate = DNA(n+1) + diphosphate. DNA polymerase III is a complex, multichain enzyme responsible for most of the replicative synthesis in bacteria. The epsilon subunit contain the editing function and is a proofreading 3'-5' exonuclease. This chain is DNA polymerase III subunit epsilon (dnaQ), found in Pasteurella multocida (strain Pm70).